We begin with the raw amino-acid sequence, 121 residues long: Large ribosomal subunit protein uL14 (121 aa).

Belongs to the universal ribosomal protein uL14 family. Part of the 50S ribosomal subunit. Forms a cluster with proteins L3 and L19. In the 70S ribosome, L14 and L19 interact and together make contacts with the 16S rRNA in bridges B5 and B8.

Binds to 23S rRNA. Forms part of two intersubunit bridges in the 70S ribosome. The sequence is that of Large ribosomal subunit protein uL14 from Prochlorococcus marinus (strain MIT 9211).